The sequence spans 87 residues: Small ribosomal subunit protein uS15 (87 aa).

The tract at residues 1 to 22 (MSEINKAEIVASNARAPSDTGS) is disordered.

Belongs to the universal ribosomal protein uS15 family. In terms of assembly, part of the 30S ribosomal subunit. Forms a bridge to the 50S subunit in the 70S ribosome, contacting the 23S rRNA.

In terms of biological role, one of the primary rRNA binding proteins, it binds directly to 16S rRNA where it helps nucleate assembly of the platform of the 30S subunit by binding and bridging several RNA helices of the 16S rRNA. Its function is as follows. Forms an intersubunit bridge (bridge B4) with the 23S rRNA of the 50S subunit in the ribosome. This chain is Small ribosomal subunit protein uS15, found in Leptothrix cholodnii (strain ATCC 51168 / LMG 8142 / SP-6) (Leptothrix discophora (strain SP-6)).